The sequence spans 155 residues: SsrA-binding protein (155 aa).

The protein belongs to the SmpB family.

It is found in the cytoplasm. Required for rescue of stalled ribosomes mediated by trans-translation. Binds to transfer-messenger RNA (tmRNA), required for stable association of tmRNA with ribosomes. tmRNA and SmpB together mimic tRNA shape, replacing the anticodon stem-loop with SmpB. tmRNA is encoded by the ssrA gene; the 2 termini fold to resemble tRNA(Ala) and it encodes a 'tag peptide', a short internal open reading frame. During trans-translation Ala-aminoacylated tmRNA acts like a tRNA, entering the A-site of stalled ribosomes, displacing the stalled mRNA. The ribosome then switches to translate the ORF on the tmRNA; the nascent peptide is terminated with the 'tag peptide' encoded by the tmRNA and targeted for degradation. The ribosome is freed to recommence translation, which seems to be the essential function of trans-translation. The protein is SsrA-binding protein of Clostridium acetobutylicum (strain ATCC 824 / DSM 792 / JCM 1419 / IAM 19013 / LMG 5710 / NBRC 13948 / NRRL B-527 / VKM B-1787 / 2291 / W).